The sequence spans 952 residues: uncharacterized protein (952 aa).

Positions 1–141 (MASLLARHTK…PWIADYLIRR (141 aa)) constitute a CheB-type methylesterase domain. A CheR-type methyltransferase domain is found at 168 to 440 (VGQFDGLEPA…SARHRIWQAL (273 aa)). The segment covering 923 to 935 (HNQTEASPETSSG) has biased composition (polar residues). Positions 923–952 (HNQTEASPETSSGGLPGSDGTGADGGAPRA) are disordered. Residues 936–952 (GLPGSDGTGADGGAPRA) show a composition bias toward gly residues.

This is an uncharacterized protein from Rhodobacter capsulatus (Rhodopseudomonas capsulata).